Consider the following 152-residue polypeptide: UPF0266 membrane protein YobD (152 aa).

The next 3 membrane-spanning stretches (helical) occupy residues 6-26 (LVLILFIAALLVYALYDQFIM), 45-65 (VDSVIFVGLVAILIYNNVTSH), and 67-87 (AQMTTWLLSALALMGFYIFWI).

It belongs to the UPF0266 family.

It is found in the cell inner membrane. The protein is UPF0266 membrane protein YobD of Salmonella paratyphi A (strain ATCC 9150 / SARB42).